The following is a 411-amino-acid chain: Glutamyl-tRNA reductase (411 aa).

Substrate contacts are provided by residues 49-52, serine 99, 104-106, and glutamine 110; these read TCNR and ENE. Residue cysteine 50 is the Nucleophile of the active site. NADP(+) is bound at residue 179–184; sequence GAGEAG.

It belongs to the glutamyl-tRNA reductase family. In terms of assembly, homodimer.

The catalysed reaction is (S)-4-amino-5-oxopentanoate + tRNA(Glu) + NADP(+) = L-glutamyl-tRNA(Glu) + NADPH + H(+). It participates in porphyrin-containing compound metabolism; protoporphyrin-IX biosynthesis; 5-aminolevulinate from L-glutamyl-tRNA(Glu): step 1/2. In terms of biological role, catalyzes the NADPH-dependent reduction of glutamyl-tRNA(Glu) to glutamate 1-semialdehyde (GSA). The protein is Glutamyl-tRNA reductase of Hyperthermus butylicus (strain DSM 5456 / JCM 9403 / PLM1-5).